A 680-amino-acid chain; its full sequence is DNA-directed RNA polymerase subunit beta' (680 aa).

Residues Cys-69, Cys-71, Cys-87, and Cys-90 each coordinate Zn(2+). Residues Asp-489, Asp-491, and Asp-493 each contribute to the Mg(2+) site.

This sequence belongs to the RNA polymerase beta' chain family. RpoC1 subfamily. In plastids the minimal PEP RNA polymerase catalytic core is composed of four subunits: alpha, beta, beta', and beta''. When a (nuclear-encoded) sigma factor is associated with the core the holoenzyme is formed, which can initiate transcription. Requires Mg(2+) as cofactor. Zn(2+) serves as cofactor.

It localises to the plastid. The protein localises to the chloroplast. It carries out the reaction RNA(n) + a ribonucleoside 5'-triphosphate = RNA(n+1) + diphosphate. In terms of biological role, DNA-dependent RNA polymerase catalyzes the transcription of DNA into RNA using the four ribonucleoside triphosphates as substrates. This is DNA-directed RNA polymerase subunit beta' from Amborella trichopoda.